Reading from the N-terminus, the 1368-residue chain is DNA-directed RNA polymerase subunit beta (1368 aa).

Belongs to the RNA polymerase beta chain family. The RNAP catalytic core consists of 2 alpha, 1 beta, 1 beta' and 1 omega subunit. When a sigma factor is associated with the core the holoenzyme is formed, which can initiate transcription.

The enzyme catalyses RNA(n) + a ribonucleoside 5'-triphosphate = RNA(n+1) + diphosphate. Its function is as follows. DNA-dependent RNA polymerase catalyzes the transcription of DNA into RNA using the four ribonucleoside triphosphates as substrates. This Paraburkholderia phymatum (strain DSM 17167 / CIP 108236 / LMG 21445 / STM815) (Burkholderia phymatum) protein is DNA-directed RNA polymerase subunit beta.